The chain runs to 390 residues: Putative cyclin-F2-1 (390 aa).

Residues 135 to 154 (YNGDDDAPAPDDSMASRPQL) form a disordered region.

This sequence belongs to the cyclin family. Cyclin F subfamily.

This Oryza sativa subsp. japonica (Rice) protein is Putative cyclin-F2-1 (CycF2-1).